Reading from the N-terminus, the 142-residue chain is Natriuretic peptides A (142 aa).

Positions 1–23 (MMLKTVIYTGVLFLICNKVLVRA) are cleaved as a signal peptide. A propeptide spanning residues 24–112 (DPLYSPYSSK…RLRDLLMAPR (89 aa)) is cleaved from the precursor. A disordered region spans residues 47–123 (DTLGQDEGND…NRGSSGCFGS (77 aa)). Positions 77 to 94 (WDRERERQWPASDYKKPQ) are enriched in basic and acidic residues. A disulfide bridge links Cys120 with Cys136.

It belongs to the natriuretic peptide family. Cleaved upon secretion to produce the functional hormone. In terms of tissue distribution, expressed in heart atrium and to a lower extent in heart ventricle, but not in brain.

It is found in the secreted. Functionally, hormone playing a key role in cardiovascular homeostasis through regulation of natriuresis, diuresis, and vasodilation. Has a cGMP-stimulating activity. This chain is Natriuretic peptides A (nppa), found in Acipenser transmontanus (White sturgeon).